The chain runs to 493 residues: MNEIIRSDAATLAARIAAKELSSVEVTQACLDQIAATDERYHAFLHVAADEALGAAAVVDEAVAAGERLPSPLAGVPLALKDVFTTVDMPTTCGSKILQGWRSPYDATVTTKLRAAGIPILGKTNMDEFAMGSSTENSAYGPTRNPWNVERVPGGSGGGSAAALAAFQAPLAIGSDTGGSIRQPAALTATVGVKPTYGTVSRYGLVACASSLDQGGPCARTVLDTALLHQVIAGHDIRDSTSVDAPVPDVVGAARAGTAGDLKGVRVGVVKQLRGEGYQPGVLASFEAAVEQLTALGAEVSEVDCPHFEYALAAYYLILPSEVSSNLARFDAMRYGLRIGDDGSHSAEEVMALTRAAGFGPEVKRRIMIGTYALSAGYYDAYYNQAQKVRTLIARDLDAAYESVDVVVSPATPTTAFGLGEKVDDPLAMYLFDLCTLPLNLAGNCGMSVPSGLSPDDDLPVGLQIMAPALADDRLYRVGAAYEAARGPLRSAI.

Catalysis depends on charge relay system residues K81 and S156. The active-site Acyl-ester intermediate is the S180.

It belongs to the amidase family. GatA subfamily. In terms of assembly, heterotrimer of A, B and C subunits.

The catalysed reaction is L-glutamyl-tRNA(Gln) + L-glutamine + ATP + H2O = L-glutaminyl-tRNA(Gln) + L-glutamate + ADP + phosphate + H(+). Its function is as follows. Allows the formation of correctly charged Gln-tRNA(Gln) through the transamidation of misacylated Glu-tRNA(Gln) in organisms which lack glutaminyl-tRNA synthetase. The reaction takes place in the presence of glutamine and ATP through an activated gamma-phospho-Glu-tRNA(Gln). The chain is Glutamyl-tRNA(Gln) amidotransferase subunit A from Mycolicibacterium paratuberculosis (strain ATCC BAA-968 / K-10) (Mycobacterium paratuberculosis).